The following is a 286-amino-acid chain: Elongation factor Ts (286 aa).

Residues 82 to 85 (TDFV) are involved in Mg(2+) ion dislocation from EF-Tu.

Belongs to the EF-Ts family.

The protein resides in the cytoplasm. Its function is as follows. Associates with the EF-Tu.GDP complex and induces the exchange of GDP to GTP. It remains bound to the aminoacyl-tRNA.EF-Tu.GTP complex up to the GTP hydrolysis stage on the ribosome. This chain is Elongation factor Ts, found in Desulfovibrio desulfuricans (strain ATCC 27774 / DSM 6949 / MB).